We begin with the raw amino-acid sequence, 502 residues long: MEIKAEEISEIIRKQIKEYGTEVAVAETGTIISIGDGIARIHGLDKAMAGELLEFPGGITGMVLNLEEDNVGAAILGEFSEIKEGDSVKLTGKIVEVPVGPALIGRVVDAIGNPIDGLGPINTDTFGKVEVKAPGIVKRKSVHQPMQTGLKAIDSMVPIGRGQRELIIGDRQTGKTAVAIDTIINQKGGDVVCIYVAIGQKRSTVAQVVSKLKEHGAMDYTIVVAATASEPAPLQFIAPYTGVTMGEFFRDSGKHALIIYDDLSKQAVAYRQLSLLLRRPPGREAYPGDVFYLHSRLLERACKVSDDCGAGSLTALPVIETQAGDVSAYIPTNVISITDGQIYLESDLFYSGVRPAINVGLSVSRVGGSAQVKAMKQVAGTLRLALAQYREMAAFAQFGSDLDKATQMQLARGARLVEILKQPQYRPIPNEKQVLIIFAANNGFVDEYPIGSLGRYETELYAFFDSRKATLLGELRDKKAIDDAMKGEIIASLEEFKKEFTA.

Residue G169 to T176 participates in ATP binding.

It belongs to the ATPase alpha/beta chains family. In terms of assembly, F-type ATPases have 2 components, CF(1) - the catalytic core - and CF(0) - the membrane proton channel. CF(1) has five subunits: alpha(3), beta(3), gamma(1), delta(1), epsilon(1). CF(0) has three main subunits: a(1), b(2) and c(9-12). The alpha and beta chains form an alternating ring which encloses part of the gamma chain. CF(1) is attached to CF(0) by a central stalk formed by the gamma and epsilon chains, while a peripheral stalk is formed by the delta and b chains.

It is found in the cell inner membrane. It carries out the reaction ATP + H2O + 4 H(+)(in) = ADP + phosphate + 5 H(+)(out). Functionally, produces ATP from ADP in the presence of a proton gradient across the membrane. The alpha chain is a regulatory subunit. This Geobacter sp. (strain M21) protein is ATP synthase subunit alpha.